We begin with the raw amino-acid sequence, 497 residues long: Putative aldehyde dehydrogenase AldA (497 aa).

Residue 213–219 (GKGSESG) participates in NAD(+) binding. Catalysis depends on residues Glu257 and Cys291.

The protein belongs to the aldehyde dehydrogenase family.

It carries out the reaction an aldehyde + NAD(+) + H2O = a carboxylate + NADH + 2 H(+). The chain is Putative aldehyde dehydrogenase AldA (aldA) from Staphylococcus haemolyticus (strain JCSC1435).